The following is a 125-amino-acid chain: MATFKLVISDPKTGIAKQIEITGPEAEKLIGKRIGDQIPVKELGINLNELFGKEFPEDVKMEIRGGTDKDGFPMRPDIHGPRRVRILLSKGPGFRPKEKGERRKKTVRGNTISPEIVQVNVKLVY.

This sequence belongs to the eukaryotic ribosomal protein eS6 family.

This Pyrococcus abyssi (strain GE5 / Orsay) protein is Small ribosomal subunit protein eS6.